The sequence spans 264 residues: 2',3'-cyclic-nucleotide 2'-phosphodiesterase (264 aa).

Residues aspartate 8, glutamate 39, asparagine 40, and asparagine 67 each coordinate Fe cation. The active-site Proton donor is the histidine 68. Fe cation-binding residues include histidine 150, histidine 175, and histidine 177.

The protein belongs to the YmdB-like family. In terms of assembly, homodimer. Requires Fe(2+) as cofactor. Fe(3+) is required as a cofactor.

Its subcellular location is the cytoplasm. The catalysed reaction is a nucleoside 2',3'-cyclic phosphate + H2O = a nucleoside 3'-phosphate + H(+). Plays a central, regulatory role in the late adaptive responses and affects the levels of many genes. May act via regulation of cAMP levels. Decreases the expression of motility genes and induces genes involved in biofilm formation, by controlling the expression of SlrR. Required for formation of intercellular nanotubes that bridge neighboring cells to allow molecular exchange. Plays a key role in directing the early stages of colony development. In vitro, has a metal-dependent phosphodiesterase activity against 2',3'-cAMP and 2',3'-cGMP. Also has 3',5'-cyclic-nucleotide phosphodiesterase activity, but cannot use cyclic di-AMP or cyclic di-GMP, and does not have phosphatase activity. The chain is 2',3'-cyclic-nucleotide 2'-phosphodiesterase (ymdB) from Bacillus subtilis (strain 168).